A 290-amino-acid chain; its full sequence is S-methyl-5'-thioadenosine phosphorylase 2 (290 aa).

Phosphate contacts are provided by residues S14, R57 to H58, and S90 to A91. A substrate-binding site is contributed by M185. S186 contributes to the phosphate binding site. A substrate-binding site is contributed by D209–D211.

The protein belongs to the PNP/MTAP phosphorylase family. MTAP subfamily. As to quaternary structure, homotrimer.

The protein resides in the cytoplasm. Its subcellular location is the nucleus. The catalysed reaction is S-methyl-5'-thioadenosine + phosphate = 5-(methylsulfanyl)-alpha-D-ribose 1-phosphate + adenine. The protein operates within amino-acid biosynthesis; L-methionine biosynthesis via salvage pathway; S-methyl-5-thio-alpha-D-ribose 1-phosphate from S-methyl-5'-thioadenosine (phosphorylase route): step 1/1. In terms of biological role, catalyzes the reversible phosphorylation of S-methyl-5'-thioadenosine (MTA) to adenine and 5-methylthioribose-1-phosphate. Involved in the breakdown of MTA, a major by-product of polyamine biosynthesis. Responsible for the first step in the methionine salvage pathway after MTA has been generated from S-adenosylmethionine. Has broad substrate specificity with 6-aminopurine nucleosides as preferred substrates. In Puccinia graminis f. sp. tritici (strain CRL 75-36-700-3 / race SCCL) (Black stem rust fungus), this protein is S-methyl-5'-thioadenosine phosphorylase 2.